The sequence spans 193 residues: Ribonuclease HII (193 aa).

The RNase H type-2 domain occupies 3 to 192 (SLVAGIDEVG…VRAVIDRSSA (190 aa)). A divalent metal cation-binding residues include D9, E10, and D101.

Belongs to the RNase HII family. Mn(2+) is required as a cofactor. It depends on Mg(2+) as a cofactor.

The protein localises to the cytoplasm. It carries out the reaction Endonucleolytic cleavage to 5'-phosphomonoester.. Endonuclease that specifically degrades the RNA of RNA-DNA hybrids. The protein is Ribonuclease HII of Methylococcus capsulatus (strain ATCC 33009 / NCIMB 11132 / Bath).